The following is a 656-amino-acid chain: DNA ligase (656 aa).

NAD(+) is bound by residues 32–36 (DAVYD) and 81–82 (SL). Lys-112 (N6-AMP-lysine intermediate) is an active-site residue. NAD(+) contacts are provided by Arg-133, Glu-167, and Lys-306. Cys-400, Cys-403, Cys-416, and Cys-421 together coordinate Zn(2+). Positions 577–656 (KSSSVFSDKT…ELLKRLKELD (80 aa)) constitute a BRCT domain.

The protein belongs to the NAD-dependent DNA ligase family. LigA subfamily. Mg(2+) is required as a cofactor. Mn(2+) serves as cofactor.

It catalyses the reaction NAD(+) + (deoxyribonucleotide)n-3'-hydroxyl + 5'-phospho-(deoxyribonucleotide)m = (deoxyribonucleotide)n+m + AMP + beta-nicotinamide D-nucleotide.. In terms of biological role, DNA ligase that catalyzes the formation of phosphodiester linkages between 5'-phosphoryl and 3'-hydroxyl groups in double-stranded DNA using NAD as a coenzyme and as the energy source for the reaction. It is essential for DNA replication and repair of damaged DNA. The chain is DNA ligase from Helicobacter pylori (strain J99 / ATCC 700824) (Campylobacter pylori J99).